Consider the following 194-residue polypeptide: Putative manganese efflux pump MntP (194 aa).

6 helical membrane passes run 3-23, 37-57, 69-89, 110-132, 147-167, and 172-192; these read PFSI…AAIG, LRAG…GWLL, DHWI…VAGL, LGLA…SLAF, CTFS…NLIG, and MLGG…HLSG.

Belongs to the MntP (TC 9.B.29) family.

The protein resides in the cell inner membrane. In terms of biological role, probably functions as a manganese efflux pump. In Xanthomonas euvesicatoria pv. vesicatoria (strain 85-10) (Xanthomonas campestris pv. vesicatoria), this protein is Putative manganese efflux pump MntP.